A 114-amino-acid chain; its full sequence is uncharacterized protein (114 aa).

This is an uncharacterized protein from Escherichia coli O6:H1 (strain CFT073 / ATCC 700928 / UPEC).